The following is an 857-amino-acid chain: Gelation factor (857 aa).

Blocked amino end (Met) is present on M1. The tract at residues 1 to 250 (MAAAPSGKTW…EKKRRETSDA (250 aa)) is actin-binding. 2 Calponin-homology (CH) domains span residues 12–117 (DVQK…LRYQ) and 125–227 (NSPK…DYAL). The interval 229–246 (KEKRDADALAALEKKRRE) is regulatory site. 6 Filamin repeats span residues 245–346 (RETS…NVKI), 347–446 (DGSD…EVKI), 447–545 (LNSD…SIHI), 546–645 (KPAA…TVTV), 646–747 (KPAP…DVKC), and 763–837 (FTVA…KQVL). Positions 832-857 (PFKQVLGNPGKKNPEVKSFTTTRTAN) are disordered.

Homodimer.

In terms of biological role, F-actin cross-linking protein. The chain is Gelation factor (abpC) from Dictyostelium discoideum (Social amoeba).